Reading from the N-terminus, the 372-residue chain is Serine protease inhibitor 42Dd (372 aa).

Positions 1–15 (MYYLCIFLWVTSVAC) are cleaved as a signal peptide. Residues Asn197 and Asn232 are each glycosylated (N-linked (GlcNAc...) asparagine).

This sequence belongs to the serpin family. In terms of tissue distribution, expressed in the ovary.

Its subcellular location is the secreted. In terms of biological role, serine protease inhibitor with activity toward trypsin. Involved in innate immunity to fungal infection by negatively regulating the Toll signaling pathway and suppressing the expression of the antifungal peptide drosomycin. Acts upstream of SPE and grass, and downstream of the fungal cell wall pattern recognition receptor GNBP3. May function specifically in the GNBP3-dependent beta-1,3-glucan branch of the Toll pathway. The protein is Serine protease inhibitor 42Dd of Drosophila melanogaster (Fruit fly).